Reading from the N-terminus, the 20-residue chain is Dihydroorotase-like protein (20 aa).

The protein belongs to the metallo-dependent hydrolases superfamily. DHOase family. PyrC' subfamily. Heterododecamer of 6 active PyrB subunits and 6 non-catalytic PyrC' subunits.

Non-functional DHOase. This is Dihydroorotase-like protein (pyrC') from Pseudomonas fluorescens biotype A.